The chain runs to 400 residues: S-adenosylmethionine synthase (400 aa).

136 to 141 (GQGSVD) provides a ligand contact to ATP.

Belongs to the AdoMet synthase 2 family. Requires Mg(2+) as cofactor.

The catalysed reaction is L-methionine + ATP + H2O = S-adenosyl-L-methionine + phosphate + diphosphate. It participates in amino-acid biosynthesis; S-adenosyl-L-methionine biosynthesis; S-adenosyl-L-methionine from L-methionine: step 1/1. Catalyzes the formation of S-adenosylmethionine from methionine and ATP. In Thermoplasma volcanium (strain ATCC 51530 / DSM 4299 / JCM 9571 / NBRC 15438 / GSS1), this protein is S-adenosylmethionine synthase.